Reading from the N-terminus, the 277-residue chain is Sulfate transport system permease protein CysT (277 aa).

Transmembrane regions (helical) follow at residues 17–37 (LGTS…ALVM), 64–84 (LLAA…MAWI), 99–119 (LMDL…ASLF), 136–156 (VTYT…PFVV), 188–205 (VVLP…ALSF), 215–235 (VIFI…MIFV), and 243–263 (PAAS…LFSI). The ABC transmembrane type-1 domain maps to 60-263 (YKVTLLAAFV…AASLLLLFSI (204 aa)).

The protein belongs to the binding-protein-dependent transport system permease family. CysTW subfamily. The complex is composed of two ATP-binding proteins (CysA), two transmembrane proteins (CysT and CysW) and a solute-binding protein (CysP).

Its subcellular location is the cell inner membrane. Part of the ABC transporter complex CysAWTP (TC 3.A.1.6.1) involved in sulfate/thiosulfate import. Probably responsible for the translocation of the substrate across the membrane. The sequence is that of Sulfate transport system permease protein CysT (cysU) from Salmonella typhimurium (strain LT2 / SGSC1412 / ATCC 700720).